Consider the following 117-residue polypeptide: Non-specific lipid-transfer protein Lac s 1 (117 aa).

A signal peptide spans 1–25 (MARMAMMILCVVLTCMVVATPYTEA). 4 disulfide bridges follow: Cys-29/Cys-76, Cys-39/Cys-53, Cys-54/Cys-99, and Cys-74/Cys-113.

Belongs to the plant LTP family.

Its function is as follows. Plant non-specific lipid-transfer proteins transfer phospholipids as well as galactolipids across membranes. May play a role in wax or cutin deposition in the cell walls of expanding epidermal cells and certain secretory tissues. The chain is Non-specific lipid-transfer protein Lac s 1 from Lactuca sativa (Garden lettuce).